Consider the following 296-residue polypeptide: uncharacterized protein (296 aa).

It localises to the mitochondrion. This is an uncharacterized protein from Podospora anserina (strain S / ATCC MYA-4624 / DSM 980 / FGSC 10383) (Pleurage anserina).